Here is a 309-residue protein sequence, read N- to C-terminus: Polyprenal reductase (309 aa).

7 helical membrane passes run 12-32, 72-92, 114-134, 151-171, 184-204, 242-262, and 270-290; these read LPLYLLVSTLGLAISCCFTLI, FYAIGLLTLFICLHTVHSLIY, IPPITPSTSILALLLISLHVA, MNLFHYAVGIVHYIILPISIM, LHVSIDDISLTQWAGAVLFWI, LVSCPHFLFEICIYLSLFLVI, and FIIMFVCINQTFAALITHSWY.

It belongs to the steroid 5-alpha reductase family. Polyprenal reductase subfamily.

It is found in the endoplasmic reticulum membrane. The catalysed reaction is a di-trans,poly-cis-dolichal + NADP(+) = a di-trans,poly-cis-polyprenal + NADPH + H(+). It functions in the pathway protein modification; protein glycosylation. Its function is as follows. Plays a key role in early steps of protein N-linked glycosylation by being involved in the conversion of polyprenol into dolichol. Acts as a polyprenal reductase that mediates the reduction of polyprenal into dolichal in a NADP-dependent mechanism. Dolichols are required for the synthesis of dolichol-linked monosaccharides and the oligosaccharide precursor used for N-glycosylation. This Caenorhabditis elegans protein is Polyprenal reductase.